Here is a 547-residue protein sequence, read N- to C-terminus: Chaperonin GroEL (547 aa).

Residues 30–33 (TLGP), Lys51, 87–91 (DGTTT), Gly415, and Asp496 contribute to the ATP site.

The protein belongs to the chaperonin (HSP60) family. In terms of assembly, forms a cylinder of 14 subunits composed of two heptameric rings stacked back-to-back. Interacts with the co-chaperonin GroES.

The protein resides in the cytoplasm. The enzyme catalyses ATP + H2O + a folded polypeptide = ADP + phosphate + an unfolded polypeptide.. Together with its co-chaperonin GroES, plays an essential role in assisting protein folding. The GroEL-GroES system forms a nano-cage that allows encapsulation of the non-native substrate proteins and provides a physical environment optimized to promote and accelerate protein folding. This Actinobacillus pleuropneumoniae serotype 7 (strain AP76) protein is Chaperonin GroEL.